A 174-amino-acid polypeptide reads, in one-letter code: Gamma-crystallin D (174 aa).

Beta/gamma crystallin 'Greek key' domains lie at 2-40 (GKITFYEDRGFQGRHYECSTDHSNLQPYFSRCNSVRVDS) and 41-83 (GCWM…RLIP). The tract at residues 84 to 87 (HAGS) is connecting peptide. Beta/gamma crystallin 'Greek key' domains are found at residues 88 to 128 (HRIR…NVLE) and 129 to 171 (GCWV…RRVM).

This sequence belongs to the beta/gamma-crystallin family. In terms of tissue distribution, detected in the superior olivary complex of the auditory hindbrain.

In terms of biological role, crystallins are the dominant structural components of the vertebrate eye lens. In Mus musculus (Mouse), this protein is Gamma-crystallin D (Crygd).